Consider the following 227-residue polypeptide: Esterase OVCA2 (227 aa).

Catalysis depends on charge relay system residues S119, D179, and H206.

The protein belongs to the LovG family.

The enzyme catalyses a carboxylic ester + H2O = an alcohol + a carboxylate + H(+). Exhibits ester hydrolase activity with a strong preference for long-chain alkyl ester substrates and high selectivity against a variety of short, branched, and substituted esters. Is able to hydrolyze ester bonds within a wide range of p-nitrophenyl derivatives (C2-C14) in vitro, with a strong preference toward substrates of &gt;8 carbons. The sequence is that of Esterase OVCA2 (OVCA2) from Bos taurus (Bovine).